Reading from the N-terminus, the 540-residue chain is Ecdysone 20-monooxygenase (540 aa).

Cys488 contacts heme.

The protein belongs to the cytochrome P450 family. Heme is required as a cofactor. In terms of tissue distribution, strong expression by embryonic stage 10 in epidermis, decreases significantly in older embryos. Third instar larvae show expression in the midgut copper cells, Malpighian tubules and fat body. In the adult ovaries, expression is seen in both nurse cells and centripetally migrating follicle cells.

Its subcellular location is the mitochondrion membrane. The catalysed reaction is ecdysone + AH2 + O2 = 20-hydroxyecdysone + A + H2O. It participates in steroid biosynthesis; ecdysteroid biosynthesis. In terms of biological role, required for CNS development; midline glial cells. Involved in the metabolism of insect hormones; responsible for all ecdysone 20-monooxygenase activity during embryonic, larval and adult stages. May be involved in the breakdown of synthetic insecticides. In Drosophila melanogaster (Fruit fly), this protein is Ecdysone 20-monooxygenase (shd).